Consider the following 378-residue polypeptide: Cobalt-precorrin-5B C(1)-methyltransferase (378 aa).

The protein belongs to the CbiD family.

It catalyses the reaction Co-precorrin-5B + S-adenosyl-L-methionine = Co-precorrin-6A + S-adenosyl-L-homocysteine. The protein operates within cofactor biosynthesis; adenosylcobalamin biosynthesis; cob(II)yrinate a,c-diamide from sirohydrochlorin (anaerobic route): step 6/10. In terms of biological role, catalyzes the methylation of C-1 in cobalt-precorrin-5B to form cobalt-precorrin-6A. The protein is Cobalt-precorrin-5B C(1)-methyltransferase of Synechocystis sp. (strain ATCC 27184 / PCC 6803 / Kazusa).